The chain runs to 167 residues: Urease accessory protein UreE (167 aa).

The tract at residues 137-158 (EAGAYQSAPHGHSHSHAHGHDH) is disordered.

Belongs to the UreE family.

Its subcellular location is the cytoplasm. Involved in urease metallocenter assembly. Binds nickel. Probably functions as a nickel donor during metallocenter assembly. The polypeptide is Urease accessory protein UreE (Pseudomonas putida (strain ATCC 700007 / DSM 6899 / JCM 31910 / BCRC 17059 / LMG 24140 / F1)).